Consider the following 387-residue polypeptide: Protein RecA (387 aa).

Position 78-85 (78-85) interacts with ATP; the sequence is GPESSGKT. Basic and acidic residues predominate over residues 350 to 369; the sequence is QTREVKSIERDPKETKETKS. The interval 350–387 is disordered; it reads QTREVKSIERDPKETKETKSKQPVSFSTEAEVDIAVGE.

This sequence belongs to the RecA family.

The protein localises to the cytoplasm. Can catalyze the hydrolysis of ATP in the presence of single-stranded DNA, the ATP-dependent uptake of single-stranded DNA by duplex DNA, and the ATP-dependent hybridization of homologous single-stranded DNAs. It interacts with LexA causing its activation and leading to its autocatalytic cleavage. This chain is Protein RecA, found in Leptospira meyeri.